The following is a 799-amino-acid chain: 1,4-alpha-glucan-branching enzyme 2, chloroplastic/amyloplastic (799 aa).

The transit peptide at 1-57 (MAFRVSGAVLGGAVRAPRLTGGGEGSLVFRHTGLFLTRGARVGCSGTHGAMRAAAAA) directs the protein to the chloroplast. Residues tryptophan 196 and lysine 232 each coordinate (1,4-alpha-D-glucosyl)n. Catalysis depends on aspartate 447, which acts as the Nucleophile. Residue glutamate 502 is the Proton donor of the active site.

This sequence belongs to the glycosyl hydrolase 13 family. GlgB subfamily. Monomer.

It is found in the plastid. The protein resides in the chloroplast. The protein localises to the amyloplast. The catalysed reaction is Transfers a segment of a (1-&gt;4)-alpha-D-glucan chain to a primary hydroxy group in a similar glucan chain.. It functions in the pathway glycan biosynthesis; starch biosynthesis. In terms of biological role, catalyzes the formation of the alpha-1,6-glucosidic linkages in starch by scission of a 1,4-alpha-linked oligosaccharide from growing alpha-1,4-glucan chains and the subsequent attachment of the oligosaccharide to the alpha-1,6 position. The sequence is that of 1,4-alpha-glucan-branching enzyme 2, chloroplastic/amyloplastic (SBE1) from Zea mays (Maize).